We begin with the raw amino-acid sequence, 593 residues long: Tyrosine-protein phosphatase non-receptor type 11 (593 aa).

2 SH2 domains span residues 6–102 (WFHP…KYPL) and 112–216 (WFHG…KQPL). The Tyrosine-protein phosphatase domain occupies 247–521 (FWEEFETLQQ…RFIYMAVQHY (275 aa)). Substrate-binding positions include Asp425, 459-465 (CSAGIGR), and Gln506. The Phosphocysteine intermediate role is filled by Cys459. A compositionally biased stretch (polar residues) spans 548–557 (SLSDQTSGDQ). The interval 548–575 (SLSDQTSGDQSPLPPCTPTPTCPEMRED) is disordered. Residues 559–568 (PLPPCTPTPT) are compositionally biased toward pro residues.

The protein belongs to the protein-tyrosine phosphatase family. Non-receptor class 2 subfamily. Post-translationally, phosphorylated by tyrosine-protein kinases. As to expression, expressed in embryonic fibroblast, hematopoietic, erythroid, myeloid and lymphoid cells.

It localises to the cytoplasm. It carries out the reaction O-phospho-L-tyrosyl-[protein] + H2O = L-tyrosyl-[protein] + phosphate. Functionally, this PTPase activity may directly link growth factor receptors and other signaling proteins through protein-tyrosine phosphorylation. The SH2 regions may interact with other cellular components to modulate its own phosphatase activity against interacting substrates. May play a positive role during the stages of erythroid cell proliferation. The polypeptide is Tyrosine-protein phosphatase non-receptor type 11 (PTPN11) (Gallus gallus (Chicken)).